Reading from the N-terminus, the 514-residue chain is Protein nucleotidyltransferase YdiU (514 aa).

ATP-binding residues include glycine 90, glycine 92, arginine 93, lysine 113, aspartate 125, glycine 126, arginine 176, and arginine 183. Aspartate 267 (proton acceptor) is an active-site residue. 2 residues coordinate Mg(2+): asparagine 268 and aspartate 277. Aspartate 277 is a binding site for ATP.

Belongs to the SELO family. Mg(2+) serves as cofactor. The cofactor is Mn(2+).

The catalysed reaction is L-seryl-[protein] + ATP = 3-O-(5'-adenylyl)-L-seryl-[protein] + diphosphate. It catalyses the reaction L-threonyl-[protein] + ATP = 3-O-(5'-adenylyl)-L-threonyl-[protein] + diphosphate. The enzyme catalyses L-tyrosyl-[protein] + ATP = O-(5'-adenylyl)-L-tyrosyl-[protein] + diphosphate. It carries out the reaction L-histidyl-[protein] + UTP = N(tele)-(5'-uridylyl)-L-histidyl-[protein] + diphosphate. The catalysed reaction is L-seryl-[protein] + UTP = O-(5'-uridylyl)-L-seryl-[protein] + diphosphate. It catalyses the reaction L-tyrosyl-[protein] + UTP = O-(5'-uridylyl)-L-tyrosyl-[protein] + diphosphate. Functionally, nucleotidyltransferase involved in the post-translational modification of proteins. It can catalyze the addition of adenosine monophosphate (AMP) or uridine monophosphate (UMP) to a protein, resulting in modifications known as AMPylation and UMPylation. This chain is Protein nucleotidyltransferase YdiU, found in Photobacterium profundum (strain SS9).